The sequence spans 184 residues: Tyrosine-protein kinase receptor Tie-1 (184 aa).

Residues 1–164 (QLLQFAADVA…RMQEARKAYV (164 aa)) form the Protein kinase domain. The active-site Proton acceptor is the Asp25. Tyr53 bears the Phosphotyrosine; by autocatalysis mark.

The protein belongs to the protein kinase superfamily. Tyr protein kinase family. Tie subfamily. As to quaternary structure, interacts with svep1. In terms of tissue distribution, expressed in most populations of endothelial cells in 24 hours embryos, including the endocardium.

It localises to the cell membrane. The catalysed reaction is L-tyrosyl-[protein] + ATP = O-phospho-L-tyrosyl-[protein] + ADP + H(+). Transmembrane tyrosine-protein kinase. Required for the formation of facial lymphatic structures and brain lymphatic endothelial cells. Also required for embryonic ventral and dorsal migration of parachordal lymphoblasts along the arterial intersegmental vessel. Plays a role in the embryonic formation of the dorsal longitudinal anastomotic vessel. The protein is Tyrosine-protein kinase receptor Tie-1 (tie1) of Danio rerio (Zebrafish).